Consider the following 191-residue polypeptide: Transcriptional regulator MET32 (191 aa).

Residues 70–96 (KKENALPKPPKSSKSKPQDRRNSTGEK) are disordered. Basic and acidic residues predominate over residues 85 to 96 (KPQDRRNSTGEK). A C2H2-type 1 zinc finger spans residues 98-120 (FKCAKCSLEFSRSSDLRRHEKTH). The segment at 126 to 150 (NICPQCGKGFARKDALKRHYDTLTC) adopts a C2H2-type 2; atypical zinc-finger fold.

Interacts with MET4 and MET28.

The protein localises to the cytoplasm. It localises to the nucleus. Auxiliary transcriptional regulator of sulfur amino acid metabolism. Involved in the transcriptional activation of MET28. This Saccharomyces cerevisiae (strain ATCC 204508 / S288c) (Baker's yeast) protein is Transcriptional regulator MET32 (MET32).